The sequence spans 112 residues: Probable insulin-like peptide beta-type 5 (112 aa).

Positions 1–19 (MNSVFTIIFVLCALQVAAS) are cleaved as a signal peptide. Positions 20–58 (FRQSFGPSMSEESASMQLLRELQHNMMESAHRPMPRARR) are cleaved as a propeptide — removed; by convertase egl-3. Cystine bridges form between C68–C97, C80–C110, C84–C111, and C96–C101.

Belongs to the insulin family. In terms of processing, may be processed by serine endoprotease bli-4. In terms of tissue distribution, expressed by ASI and ASJ sensory neurons.

It is found in the secreted. Functionally, probable insulin-like peptide which negatively regulates synapse development at the neuromuscular junctions. Probably acts as a daf-2/InsR agonist ligand to prevent dauer formation under optimal environmental conditions. Acts on AWC sensory neurons to regulate high salt chemotaxis responses. This is Probable insulin-like peptide beta-type 5 (ins-6) from Caenorhabditis elegans.